The sequence spans 111 residues: uncharacterized protein (111 aa).

2 helical membrane passes run 18–38 (LNVFLFFLGFLLPLFLGLFVS) and 42–62 (LALALSSGWFIMDLILFRTFP).

Its subcellular location is the membrane. This is an uncharacterized protein from Saccharomyces cerevisiae (strain ATCC 204508 / S288c) (Baker's yeast).